The chain runs to 356 residues: Glutamate 5-kinase (356 aa).

ATP is bound at residue Lys-6. The substrate site is built by Ser-46, Asp-135, and Asn-147. 202–208 is an ATP binding site; it reads TGGMRSK. In terms of domain architecture, PUA spans 265-342; sequence KGIIVVDRGA…SEVRKLLNTT (78 aa).

The protein belongs to the glutamate 5-kinase family.

The protein localises to the cytoplasm. It catalyses the reaction L-glutamate + ATP = L-glutamyl 5-phosphate + ADP. It participates in amino-acid biosynthesis; L-proline biosynthesis; L-glutamate 5-semialdehyde from L-glutamate: step 1/2. In terms of biological role, catalyzes the transfer of a phosphate group to glutamate to form L-glutamate 5-phosphate. The polypeptide is Glutamate 5-kinase (Aquifex aeolicus (strain VF5)).